A 416-amino-acid polypeptide reads, in one-letter code: Tryptophan synthase beta chain (416 aa).

The residue at position 98 (K98) is an N6-(pyridoxal phosphate)lysine.

Belongs to the TrpB family. In terms of assembly, tetramer of two alpha and two beta chains. Pyridoxal 5'-phosphate is required as a cofactor.

The catalysed reaction is (1S,2R)-1-C-(indol-3-yl)glycerol 3-phosphate + L-serine = D-glyceraldehyde 3-phosphate + L-tryptophan + H2O. Its pathway is amino-acid biosynthesis; L-tryptophan biosynthesis; L-tryptophan from chorismate: step 5/5. Functionally, the beta subunit is responsible for the synthesis of L-tryptophan from indole and L-serine. This is Tryptophan synthase beta chain from Ruegeria pomeroyi (strain ATCC 700808 / DSM 15171 / DSS-3) (Silicibacter pomeroyi).